Reading from the N-terminus, the 427-residue chain is Phosphoribosylamine--glycine ligase (427 aa).

The region spanning Lys-107–Asp-312 is the ATP-grasp domain. Ile-133–Ser-193 is a binding site for ATP. Residues Glu-282 and Asn-284 each contribute to the Mg(2+) site.

The protein belongs to the GARS family. Mg(2+) is required as a cofactor. Requires Mn(2+) as cofactor.

The enzyme catalyses 5-phospho-beta-D-ribosylamine + glycine + ATP = N(1)-(5-phospho-beta-D-ribosyl)glycinamide + ADP + phosphate + H(+). It functions in the pathway purine metabolism; IMP biosynthesis via de novo pathway; N(1)-(5-phospho-D-ribosyl)glycinamide from 5-phospho-alpha-D-ribose 1-diphosphate: step 2/2. The polypeptide is Phosphoribosylamine--glycine ligase (Brucella melitensis biotype 1 (strain ATCC 23456 / CCUG 17765 / NCTC 10094 / 16M)).